The chain runs to 265 residues: MEMO1 family protein Mbar_A1422 (265 aa).

It belongs to the MEMO1 family.

The sequence is that of MEMO1 family protein Mbar_A1422 from Methanosarcina barkeri (strain Fusaro / DSM 804).